The sequence spans 155 residues: Putative pre-16S rRNA nuclease (155 aa).

It belongs to the YqgF nuclease family.

The protein localises to the cytoplasm. Could be a nuclease involved in processing of the 5'-end of pre-16S rRNA. This Xanthomonas euvesicatoria pv. vesicatoria (strain 85-10) (Xanthomonas campestris pv. vesicatoria) protein is Putative pre-16S rRNA nuclease.